We begin with the raw amino-acid sequence, 400 residues long: Exodeoxyribonuclease 7 large subunit (400 aa).

The protein belongs to the XseA family. As to quaternary structure, heterooligomer composed of large and small subunits.

Its subcellular location is the cytoplasm. The catalysed reaction is Exonucleolytic cleavage in either 5'- to 3'- or 3'- to 5'-direction to yield nucleoside 5'-phosphates.. Functionally, bidirectionally degrades single-stranded DNA into large acid-insoluble oligonucleotides, which are then degraded further into small acid-soluble oligonucleotides. This is Exodeoxyribonuclease 7 large subunit from Clostridium perfringens (strain 13 / Type A).